The sequence spans 405 residues: MKVLILNAGSSSQKSCLYEIPDDALLTEAPQPLWEGKVNWTQDRSVAEIEVKTAGGETLHESIYGDSRQAHVTYMLYTLSRGTTKVIGQLSEIDVVGHRVVHGGQNYRNSVIITEEVKQAIAKLSNLAPAHNPAALEGIEAIEKSLGDVPQVAVFDTGFHATLPDAAAIYPGPFEWVEQGIRRYGFHGISHQYCSARAAQILGRDLASLRIITCHLGNGCSLAAIKNGRSIDTTMGFTPLDGLMMGSRSGSIDPGIIVHLMRQSDYSAERLDYVLNKASGLRGISGVSSDLPQVIEAITQGNYRAQLAWDMYVHRLRSGIGSMLASLGGLDVLVFTAGVGEKSPGIRQAACEAFGFLGLKLDPEKNQNNPVDIDIATADSTVRVLVIHTQEDWAIAQQCWHLLNR.

Asn7 serves as a coordination point for Mg(2+). Position 14 (Lys14) interacts with ATP. Residue Arg99 coordinates substrate. The active-site Proton donor/acceptor is the Asp156. 215–219 is a binding site for ATP; sequence HLGNG. Glu391 lines the Mg(2+) pocket.

Belongs to the acetokinase family. As to quaternary structure, homodimer. It depends on Mg(2+) as a cofactor. Mn(2+) is required as a cofactor.

The protein localises to the cytoplasm. The enzyme catalyses acetate + ATP = acetyl phosphate + ADP. Its pathway is metabolic intermediate biosynthesis; acetyl-CoA biosynthesis; acetyl-CoA from acetate: step 1/2. Catalyzes the formation of acetyl phosphate from acetate and ATP. Can also catalyze the reverse reaction. The polypeptide is Acetate kinase (Trichormus variabilis (strain ATCC 29413 / PCC 7937) (Anabaena variabilis)).